The chain runs to 298 residues: Probable phosphoserine phosphatase (298 aa).

The active-site Nucleophile is the aspartate 82. Positions 82 and 84 each coordinate Mg(2+). Aspartate 84 functions as the Proton donor in the catalytic mechanism. Substrate-binding positions include glutamate 91, arginine 127, 170–171, and lysine 217; that span reads SG. Aspartate 240 provides a ligand contact to Mg(2+). Position 243 (asparagine 243) interacts with substrate.

The protein belongs to the HAD-like hydrolase superfamily. SerB family. It depends on Mg(2+) as a cofactor.

The enzyme catalyses O-phospho-L-serine + H2O = L-serine + phosphate. The catalysed reaction is O-phospho-D-serine + H2O = D-serine + phosphate. It participates in amino-acid biosynthesis; L-serine biosynthesis; L-serine from 3-phospho-D-glycerate: step 3/3. This chain is Probable phosphoserine phosphatase, found in Schizosaccharomyces pombe (strain 972 / ATCC 24843) (Fission yeast).